Reading from the N-terminus, the 253-residue chain is Triosephosphate isomerase (253 aa).

N9–K11 is a substrate binding site. The active-site Electrophile is H98. The active-site Proton acceptor is E170. Residues G176, S216, and G237–G238 contribute to the substrate site.

This sequence belongs to the triosephosphate isomerase family. As to quaternary structure, homodimer.

The protein localises to the cytoplasm. It catalyses the reaction D-glyceraldehyde 3-phosphate = dihydroxyacetone phosphate. It participates in carbohydrate biosynthesis; gluconeogenesis. Its pathway is carbohydrate degradation; glycolysis; D-glyceraldehyde 3-phosphate from glycerone phosphate: step 1/1. Involved in the gluconeogenesis. Catalyzes stereospecifically the conversion of dihydroxyacetone phosphate (DHAP) to D-glyceraldehyde-3-phosphate (G3P). This Amoebophilus asiaticus (strain 5a2) protein is Triosephosphate isomerase.